The primary structure comprises 353 residues: Guanine nucleotide-binding protein subunit alpha (353 aa).

The tract at residues 1–26 (MGCGMSVEEKEGKARNEEIENQLKRD) is disordered. Residue Gly2 is the site of N-myristoyl glycine attachment. Cys3 carries S-palmitoyl cysteine lipidation. A compositionally biased stretch (basic and acidic residues) spans 7 to 26 (VEEKEGKARNEEIENQLKRD). Positions 32–353 (NEIKMLLLGA…QENLRLCGLI (322 aa)) constitute a G-alpha domain. Residues 35–48 (KMLLLGAGESGKST) are G1 motif. Positions 43, 44, 45, 46, 47, 48, 150, 175, 181, 203, 269, 270, 272, and 325 each coordinate GTP. Ser47 is a Mg(2+) binding site. The tract at residues 173–181 (DVLRSRVKT) is G2 motif. Thr181 is a binding site for Mg(2+). The G3 motif stretch occupies residues 196-205 (YRMFDVGGQR). The G4 motif stretch occupies residues 265-272 (ILFLNKID). A G5 motif region spans residues 323–328 (TCATDT).

This sequence belongs to the G-alpha family. G(q) subfamily. As to quaternary structure, g proteins are composed of 3 units; alpha, beta and gamma. The alpha chain contains the guanine nucleotide binding site. Requires Mg(2+) as cofactor.

In terms of biological role, guanine nucleotide-binding proteins (G proteins) are involved as modulators or transducers in various transmembrane signaling systems. The polypeptide is Guanine nucleotide-binding protein subunit alpha (SSG-1) (Sporothrix schenckii (strain ATCC 58251 / de Perez 2211183) (Rose-picker's disease fungus)).